We begin with the raw amino-acid sequence, 334 residues long: Isocitrate/homoisocitrate dehydrogenase (334 aa).

70–72 is an NADH binding site; it reads ATS. The (2R,3S)-homoisocitrate site is built by S72, R85, R88, R98, R118, Y125, K171, and N173. Residue N173 coordinates NADH. Residues D204, D228, and D232 each coordinate Mg(2+). Residues 261–265 and N273 each bind NADH; that span reads GSAPD.

This sequence belongs to the isocitrate and isopropylmalate dehydrogenases family. Homotetramer. Dimer of dimers. The homotetramer can transiently dissociate into homodimers. Mg(2+) serves as cofactor.

The enzyme catalyses (2R,3S)-homoisocitrate + NAD(+) = 2-oxoadipate + CO2 + NADH. It catalyses the reaction D-threo-isocitrate + NAD(+) = 2-oxoglutarate + CO2 + NADH. It participates in amino-acid biosynthesis; L-lysine biosynthesis via AAA pathway; L-alpha-aminoadipate from 2-oxoglutarate: step 4/5. Functionally, catalyzes the NAD(+)-dependent oxidative decarboxylation of homoisocitrate to 2-oxoadipate (alpha-ketoadipate), a reaction involved in lysine biosynthesis through the alpha-aminoadipate pathway. In addition, has high activity with isocitrate, but is inactive with 3-isopropylmalate. This Thermus thermophilus (strain ATCC BAA-163 / DSM 7039 / HB27) protein is Isocitrate/homoisocitrate dehydrogenase (hicd).